Here is a 236-residue protein sequence, read N- to C-terminus: Lectin (236 aa).

The N-linked (GlcNAc...) asparagine glycan is linked to N118.

It belongs to the leguminous lectin family. In terms of assembly, homodimer of noncovalently associated chains.

D-mannose and D-glucose specific lectin. The protein is Lectin of Onobrychis viciifolia (Common sainfoin).